Consider the following 99-residue polypeptide: Protein translation factor SUI1 homolog (99 aa).

Belongs to the SUI1 family.

In Picrophilus torridus (strain ATCC 700027 / DSM 9790 / JCM 10055 / NBRC 100828 / KAW 2/3), this protein is Protein translation factor SUI1 homolog.